A 165-amino-acid polypeptide reads, in one-letter code: Hydroxyproline-rich systemin A (165 aa).

An N-terminal signal peptide occupies residues 1-18 (MRVLFLIYLILSPFGAEA). The propeptide occupies 19 to 35 (RTLLENHEGLNVGSGYG). Disordered stretches follow at residues 33–70 (GYGR…TSEN) and 142–165 (YWNR…LHSY). A 4-hydroxyproline mark is found at Pro42, Pro43, Pro45, Pro49, and Pro50. O-linked (Ara...) hydroxyproline glycans are attached at residues Pro42, Pro43, Pro45, Pro49, and Pro50. The propeptide occupies 54-143 (VSNSVSPTRT…FDSKSDERYW (90 aa)). 4-hydroxyproline is present on residues Pro150, Pro151, and Pro153. Pro150, Pro151, and Pro153 each carry an O-linked (Ara...) hydroxyproline glycan. Positions 162 to 165 (LHSY) are excised as a propeptide.

Post-translationally, O-glycosylated; contains pentose side chains. In terms of tissue distribution, expressed in leaves.

It localises to the secreted. Activates a lipid-based signal transduction pathway in which linolenic acid is converted to jasmonic acid, a potent activator of defense gene transcription, including proteinase inhibitors. This chain is Hydroxyproline-rich systemin A, found in Nicotiana tabacum (Common tobacco).